The primary structure comprises 483 residues: Regulatory protein ViaA (483 aa).

Belongs to the ViaA family. In terms of assembly, homodimer. Interacts with RavA.

The protein localises to the cytoplasm. Its function is as follows. Component of the RavA-ViaA chaperone complex, which may act on the membrane to optimize the function of some of the respiratory chains. ViaA stimulates the ATPase activity of RavA. In Escherichia coli O7:K1 (strain IAI39 / ExPEC), this protein is Regulatory protein ViaA.